The following is a 340-amino-acid chain: Flavonoid 7-O-methyltransferase 1 (340 aa).

S-adenosyl-L-methionine is bound at residue aspartate 207. The active-site Proton acceptor is the histidine 245.

The protein belongs to the class I-like SAM-binding methyltransferase superfamily. Cation-independent O-methyltransferase family. As to quaternary structure, homodimer. Expressed in leaves.

It catalyses the reaction (2S)-naringenin + S-adenosyl-L-methionine = (2S)-sakuranetin + S-adenosyl-L-homocysteine + H(+). It carries out the reaction scutellarein + S-adenosyl-L-methionine = scutellarein 7-methyl ether + S-adenosyl-L-homocysteine. The enzyme catalyses apigenin + S-adenosyl-L-methionine = genkwanin + S-adenosyl-L-homocysteine + H(+). The catalysed reaction is luteolin + S-adenosyl-L-methionine = luteolin 7-methyl ether + S-adenosyl-L-homocysteine + H(+). It catalyses the reaction chrysoeriol + S-adenosyl-L-methionine = velutin + S-adenosyl-L-homocysteine. It carries out the reaction diosmetin + S-adenosyl-L-methionine = luteolin 4',7-dimethyl ether + S-adenosyl-L-homocysteine. The enzyme catalyses acacetin + S-adenosyl-L-methionine = apigenin 4',7-dimethyl ether + S-adenosyl-L-homocysteine. The catalysed reaction is scutellarein 4'-methyl ether + S-adenosyl-L-methionine = ladanein + S-adenosyl-L-homocysteine. It functions in the pathway flavonoid metabolism. In terms of biological role, flavonoid 7-O-methyltransferase involved in the biosynthesis of polymethoxylated flavonoids natural products such as nevadensin and salvigenin, aroma compounds which contribute to the flavor of sweet basil, and exhibit pharmacological activities such as anti-allergic, anti-oxidant, antibacterial, anti-proliferative, and anti-inflammatory effects. Catalyzes S-adenosylmethionine-dependent regioselective 7-O-methylation of flavonoids; active on various hydroxylated flavonoid substrates, including apigenin (API) and luteolin (LUT), and, with a lower efficiency, scutellarein (SCU), naringenin (NAR), chrysoeriol (CHRYS), diosmetin (DIOS), acacetin (ACA) and scutellarein-7-methyl ether (SCU7Me). The sequence is that of Flavonoid 7-O-methyltransferase 1 from Ocimum basilicum (Sweet basil).